The primary structure comprises 61 residues: Sec-independent protein translocase protein TatA (61 aa).

Residues 1-21 (MFGLGITEILLILGIIILIFG) form a helical membrane-spanning segment.

The protein belongs to the TatA/E family. The Tat system comprises two distinct complexes: a TatABC complex, containing multiple copies of TatA, TatB and TatC subunits, and a separate TatA complex, containing only TatA subunits. Substrates initially bind to the TatABC complex, which probably triggers association of the separate TatA complex to form the active translocon.

The protein localises to the cell inner membrane. Functionally, part of the twin-arginine translocation (Tat) system that transports large folded proteins containing a characteristic twin-arginine motif in their signal peptide across membranes. TatA could form the protein-conducting channel of the Tat system. The polypeptide is Sec-independent protein translocase protein TatA (Maridesulfovibrio salexigens (strain ATCC 14822 / DSM 2638 / NCIMB 8403 / VKM B-1763) (Desulfovibrio salexigens)).